The primary structure comprises 180 residues: uncharacterized protein (180 aa).

The N-terminal stretch at Met-1–Ala-24 is a signal peptide.

Part of the elfADCG-ycbUVF fimbrial operon, which promotes adhesion of bacteria to different abiotic surfaces. This is an uncharacterized protein from Escherichia coli (strain K12).